Consider the following 446-residue polypeptide: Probable inactive lipase MT1628 (446 aa).

Belongs to the AB hydrolase superfamily. Lipase family.

This chain is Probable inactive lipase MT1628, found in Mycobacterium tuberculosis (strain CDC 1551 / Oshkosh).